A 235-amino-acid polypeptide reads, in one-letter code: Sugar fermentation stimulation protein homolog (235 aa).

Belongs to the SfsA family.

This Maricaulis maris (strain MCS10) (Caulobacter maris) protein is Sugar fermentation stimulation protein homolog.